We begin with the raw amino-acid sequence, 281 residues long: NADPH-dependent 7-cyano-7-deazaguanine reductase (281 aa).

88 to 90 (IES) contacts substrate. 90-91 (SK) serves as a coordination point for NADPH. Cys189 acts as the Thioimide intermediate in catalysis. Asp196 acts as the Proton donor in catalysis. 228–229 (HE) lines the substrate pocket. An NADPH-binding site is contributed by 257–258 (RG).

It belongs to the GTP cyclohydrolase I family. QueF type 2 subfamily. In terms of assembly, homodimer.

The protein resides in the cytoplasm. It carries out the reaction 7-aminomethyl-7-carbaguanine + 2 NADP(+) = 7-cyano-7-deazaguanine + 2 NADPH + 3 H(+). It functions in the pathway tRNA modification; tRNA-queuosine biosynthesis. Functionally, catalyzes the NADPH-dependent reduction of 7-cyano-7-deazaguanine (preQ0) to 7-aminomethyl-7-deazaguanine (preQ1). The polypeptide is NADPH-dependent 7-cyano-7-deazaguanine reductase (Yersinia pestis bv. Antiqua (strain Antiqua)).